We begin with the raw amino-acid sequence, 1028 residues long: GPI inositol-deacylase (1028 aa).

A helical membrane pass occupies residues 51–71; the sequence is VFGLGLLLFCIVCMAYLSPFL. Asparagine 166 is a glycosylation site (N-linked (GlcNAc...) asparagine). Serine 231 is a catalytic residue. Asparagine 299, asparagine 530, asparagine 586, and asparagine 679 each carry an N-linked (GlcNAc...) asparagine glycan. The next 8 helical transmembrane spans lie at 699-719, 740-760, 799-819, 867-887, 915-935, 948-968, 979-999, and 1002-1022; these read LAVA…QFAL, FWLK…ISFI, WIGP…AFGI, IMIL…LLFL, SYLL…FVFL, SHHN…NAGL, ISKL…VIYG, and NLFW…FTSL.

The protein belongs to the GPI inositol-deacylase family.

It localises to the endoplasmic reticulum membrane. Involved in inositol deacylation of GPI-anchored proteins which plays important roles in the quality control and ER-associated degradation of GPI-anchored proteins. The protein is GPI inositol-deacylase (BST1) of Eremothecium gossypii (strain ATCC 10895 / CBS 109.51 / FGSC 9923 / NRRL Y-1056) (Yeast).